The primary structure comprises 134 residues: Protein NrdI (134 aa).

The protein belongs to the NrdI family.

Functionally, probably involved in ribonucleotide reductase function. This is Protein NrdI from Chromohalobacter salexigens (strain ATCC BAA-138 / DSM 3043 / CIP 106854 / NCIMB 13768 / 1H11).